Here is a 545-residue protein sequence, read N- to C-terminus: Threonine--tRNA ligase catalytic subunit (545 aa).

The tract at residues 139-433 is catalytic; sequence DHRLIGEKLD…LLEHFKGKLP (295 aa). Zn(2+) contacts are provided by Cys-231, His-282, and His-410.

This sequence belongs to the class-II aminoacyl-tRNA synthetase family. Homodimer. Probably interacts with its editing subunit. It depends on Zn(2+) as a cofactor.

Its subcellular location is the cytoplasm. It catalyses the reaction tRNA(Thr) + L-threonine + ATP = L-threonyl-tRNA(Thr) + AMP + diphosphate + H(+). Its function is as follows. Catalyzes the attachment of threonine to tRNA(Thr) in a two-step reaction: L-threonine is first activated by ATP to form Thr-AMP and then transferred to the acceptor end of tRNA(Thr). Also activates L-serine and transfers it to tRNA(Thr) but cannot deacylate incorrectly charged amino acid; unlike most archaea the editing function is found in a freestanding protein. This chain is Threonine--tRNA ligase catalytic subunit, found in Saccharolobus islandicus (strain Y.G.57.14 / Yellowstone #1) (Sulfolobus islandicus).